Reading from the N-terminus, the 64-residue chain is Large ribosomal subunit protein bL35 (64 aa).

The disordered stretch occupies residues 19 to 44; sequence TGKLKASRPGRRHKLTGKTPKRKRQL. A compositionally biased stretch (basic residues) spans 23–44; the sequence is KASRPGRRHKLTGKTPKRKRQL.

This sequence belongs to the bacterial ribosomal protein bL35 family.

This chain is Large ribosomal subunit protein bL35, found in Protochlamydia amoebophila (strain UWE25).